Reading from the N-terminus, the 298-residue chain is MKPDIIKKRRPLPSDDEDEYNEEDEMYEDDNNNYEEDEDDDDDDDEDDEDDDENEEELIKQQLSNVSFSSLLKYKKNGPTDKLNLNTITKNLQQQKSFKKEEQQEKEEMNSKNKYKIKRESSDAPVEMTAMKPVSRFRQVVVNKTKMNVRDPRFDSLSGGKYNEDLYRKRYGFLDDVIKRDVERMESTWKQMDDCRERDQLYKKIQSKKSQLKTQQLKDQKRETKNKLWSNEIESVKKGKTPYHISNKTVKQFELQEKFKQLKASNKLDKFMETKRKRISSKEKTFLPQRRSFDQDEN.

Positions 1 to 131 (MKPDIIKKRR…SDAPVEMTAM (131 aa)) are disordered. The span at 14-56 (SDDEDEYNEEDEMYEDDNNNYEEDEDDDDDDDEDDEDDDENEE) shows a compositional bias: acidic residues. Composition is skewed to polar residues over residues 61 to 70 (QQLSNVSFSS) and 83 to 92 (LNLNTITKNL). 2 coiled-coil regions span residues 88 to 112 (ITKN…MNSK) and 196 to 228 (RERD…KNKL). Positions 98–111 (FKKEEQQEKEEMNS) are enriched in basic and acidic residues. Residues 279–298 (ISSKEKTFLPQRRSFDQDEN) are disordered.

It belongs to the RRP36 family.

It is found in the nucleus. The protein resides in the nucleolus. Its function is as follows. Involved in the early processing steps of the pre-rRNA in the maturation pathway leading to the 18S rRNA. The polypeptide is Ribosomal RNA processing protein 36 homolog (Dictyostelium discoideum (Social amoeba)).